Reading from the N-terminus, the 156-residue chain is ATP synthase subunit b (156 aa).

A helical transmembrane segment spans residues 3-23; that stretch reads ITFTIFAQSLAFAALIWIVAT.

It belongs to the ATPase B chain family. F-type ATPases have 2 components, F(1) - the catalytic core - and F(0) - the membrane proton channel. F(1) has five subunits: alpha(3), beta(3), gamma(1), delta(1), epsilon(1). F(0) has three main subunits: a(1), b(2) and c(10-14). The alpha and beta chains form an alternating ring which encloses part of the gamma chain. F(1) is attached to F(0) by a central stalk formed by the gamma and epsilon chains, while a peripheral stalk is formed by the delta and b chains.

It is found in the cell inner membrane. F(1)F(0) ATP synthase produces ATP from ADP in the presence of a proton or sodium gradient. F-type ATPases consist of two structural domains, F(1) containing the extramembraneous catalytic core and F(0) containing the membrane proton channel, linked together by a central stalk and a peripheral stalk. During catalysis, ATP synthesis in the catalytic domain of F(1) is coupled via a rotary mechanism of the central stalk subunits to proton translocation. Its function is as follows. Component of the F(0) channel, it forms part of the peripheral stalk, linking F(1) to F(0). This is ATP synthase subunit b from Xylella fastidiosa (strain M23).